Reading from the N-terminus, the 204-residue chain is uncharacterized protein (204 aa).

In terms of tissue distribution, component of the acid-soluble organic matrix of the aragonitic skeleton (at protein level).

The protein resides in the secreted. This is an uncharacterized protein from Acropora millepora (Staghorn coral).